We begin with the raw amino-acid sequence, 938 residues long: Isoleucine--tRNA ligase (938 aa).

The 'HIGH' region motif lies at 58–68 (PYANGHIHLGT). E565 provides a ligand contact to L-isoleucyl-5'-AMP. The 'KMSKS' region motif lies at 606–610 (KMSKS). K609 contributes to the ATP binding site. Residues C905, C908, C925, and C928 each contribute to the Zn(2+) site.

The protein belongs to the class-I aminoacyl-tRNA synthetase family. IleS type 1 subfamily. In terms of assembly, monomer. Zn(2+) serves as cofactor.

Its subcellular location is the cytoplasm. It carries out the reaction tRNA(Ile) + L-isoleucine + ATP = L-isoleucyl-tRNA(Ile) + AMP + diphosphate. Functionally, catalyzes the attachment of isoleucine to tRNA(Ile). As IleRS can inadvertently accommodate and process structurally similar amino acids such as valine, to avoid such errors it has two additional distinct tRNA(Ile)-dependent editing activities. One activity is designated as 'pretransfer' editing and involves the hydrolysis of activated Val-AMP. The other activity is designated 'posttransfer' editing and involves deacylation of mischarged Val-tRNA(Ile). The sequence is that of Isoleucine--tRNA ligase from Nitratidesulfovibrio vulgaris (strain DSM 19637 / Miyazaki F) (Desulfovibrio vulgaris).